The chain runs to 168 residues: 6,7-dimethyl-8-ribityllumazine synthase (168 aa).

5-amino-6-(D-ribitylamino)uracil contacts are provided by residues Trp31, 65–67 (SFE), and 89–91 (CVV). Position 94–95 (94–95 (DT)) interacts with (2S)-2-hydroxy-3-oxobutyl phosphate. Residue His97 is the Proton donor of the active site. Tyr122 lines the 5-amino-6-(D-ribitylamino)uracil pocket. Arg136 lines the (2S)-2-hydroxy-3-oxobutyl phosphate pocket.

Belongs to the DMRL synthase family.

It catalyses the reaction (2S)-2-hydroxy-3-oxobutyl phosphate + 5-amino-6-(D-ribitylamino)uracil = 6,7-dimethyl-8-(1-D-ribityl)lumazine + phosphate + 2 H2O + H(+). Its pathway is cofactor biosynthesis; riboflavin biosynthesis; riboflavin from 2-hydroxy-3-oxobutyl phosphate and 5-amino-6-(D-ribitylamino)uracil: step 1/2. Catalyzes the formation of 6,7-dimethyl-8-ribityllumazine by condensation of 5-amino-6-(D-ribitylamino)uracil with 3,4-dihydroxy-2-butanone 4-phosphate. This is the penultimate step in the biosynthesis of riboflavin. This chain is 6,7-dimethyl-8-ribityllumazine synthase, found in Phocaeicola vulgatus (strain ATCC 8482 / DSM 1447 / JCM 5826 / CCUG 4940 / NBRC 14291 / NCTC 11154) (Bacteroides vulgatus).